Consider the following 339-residue polypeptide: NADH-quinone oxidoreductase subunit H (339 aa).

Helical transmembrane passes span 9–29 (IFPL…LILC), 50–70 (PNVV…KLLF), 82–102 (ILFI…WAVI), 115–135 (VGVL…IIAG), 161–181 (MGLV…SGII), 187–207 (MPWW…ISVL), 235–255 (MGFA…SAMT), 275–295 (IPGF…FLWI), and 311–331 (GWKV…SVLV).

The protein belongs to the complex I subunit 1 family. As to quaternary structure, NDH-1 is composed of 14 different subunits. Subunits NuoA, H, J, K, L, M, N constitute the membrane sector of the complex.

The protein localises to the cell inner membrane. It carries out the reaction a quinone + NADH + 5 H(+)(in) = a quinol + NAD(+) + 4 H(+)(out). Functionally, NDH-1 shuttles electrons from NADH, via FMN and iron-sulfur (Fe-S) centers, to quinones in the respiratory chain. The immediate electron acceptor for the enzyme in this species is believed to be ubiquinone. Couples the redox reaction to proton translocation (for every two electrons transferred, four hydrogen ions are translocated across the cytoplasmic membrane), and thus conserves the redox energy in a proton gradient. This subunit may bind ubiquinone. This chain is NADH-quinone oxidoreductase subunit H, found in Rickettsia conorii (strain ATCC VR-613 / Malish 7).